Reading from the N-terminus, the 119-residue chain is Flagellar transcriptional regulator FlhD (119 aa).

The protein belongs to the FlhD family. Homodimer; disulfide-linked. Forms a heterohexamer composed of two FlhC and four FlhD subunits. Each FlhC binds a FlhD dimer, forming a heterotrimer, and a hexamer assembles by dimerization of two heterotrimers.

It localises to the cytoplasm. In terms of biological role, functions in complex with FlhC as a master transcriptional regulator that regulates transcription of several flagellar and non-flagellar operons by binding to their promoter region. Activates expression of class 2 flagellar genes, including fliA, which is a flagellum-specific sigma factor that turns on the class 3 genes. Also regulates genes whose products function in a variety of physiological pathways. The polypeptide is Flagellar transcriptional regulator FlhD (Shigella dysenteriae serotype 1 (strain Sd197)).